Reading from the N-terminus, the 349-residue chain is Glycerol-3-phosphate dehydrogenase [NAD(P)+] (349 aa).

The NADPH site is built by Ser-12, Trp-13, and Lys-107. Residues Lys-107, Gly-138, and Ser-140 each contribute to the sn-glycerol 3-phosphate site. Ala-142 contacts NADPH. The sn-glycerol 3-phosphate site is built by Lys-193, Asp-246, Ser-256, Arg-257, and Asn-258. Lys-193 serves as the catalytic Proton acceptor. Arg-257 is a binding site for NADPH. Residues Val-281 and Glu-283 each contribute to the NADPH site.

Belongs to the NAD-dependent glycerol-3-phosphate dehydrogenase family.

Its subcellular location is the cytoplasm. It catalyses the reaction sn-glycerol 3-phosphate + NAD(+) = dihydroxyacetone phosphate + NADH + H(+). It carries out the reaction sn-glycerol 3-phosphate + NADP(+) = dihydroxyacetone phosphate + NADPH + H(+). The protein operates within membrane lipid metabolism; glycerophospholipid metabolism. In terms of biological role, catalyzes the reduction of the glycolytic intermediate dihydroxyacetone phosphate (DHAP) to sn-glycerol 3-phosphate (G3P), the key precursor for phospholipid synthesis. The polypeptide is Glycerol-3-phosphate dehydrogenase [NAD(P)+] (Pelotomaculum thermopropionicum (strain DSM 13744 / JCM 10971 / SI)).